The chain runs to 837 residues: V-type proton ATPase 116 kDa subunit a 1 (837 aa).

Residues 1-388 are Cytoplasmic-facing; it reads MGELFRSEEM…DAYGIGTYRE (388 aa). Residues Thr250 and Thr360 each carry the phosphothreonine modification. Residue Tyr364 is modified to Phosphotyrosine. Residues 389-407 form a helical membrane-spanning segment; it reads INPAPYTIITFPFLFAVMF. Topologically, residues 408–409 are vacuolar; sequence GD. Residues 410–426 traverse the membrane as a helical segment; it reads FGHGILMTLFAVWMVLR. Residues 427-441 lie on the Cytoplasmic side of the membrane; the sequence is ESRILSQKNENEMFS. A helical transmembrane segment spans residues 442–471; that stretch reads TVFSGRYIILLMGVFSMYTGLIYNDCFSKS. The Vacuolar portion of the chain corresponds to 472–534; the sequence is LNIFGSSWSV…ATNKLTFLNS (63 aa). N-linked (GalNAc...) asparagine glycosylation is present at Asn488. Residues 535–554 traverse the membrane as a helical segment; that stretch reads FKMKMSVILGIIHMLFGVSL. Topologically, residues 555–572 are cytoplasmic; that stretch reads SLFNHIYFKKPLNIYFGF. A helical membrane pass occupies residues 573–593; it reads IPEIIFMTSLFGYLVILIFYK. Residues 594-638 lie on the Vacuolar side of the membrane; that stretch reads WTAYDAHTSENAPSLLIHFINMFLFSYPESGYSMLYSGQKGIQCF. Residues 639–658 form a helical membrane-spanning segment; that stretch reads LVVVALLCVPWMLLFKPLVL. Residues 659 to 724 lie on the Cytoplasmic side of the membrane; that stretch reads RRQYLRRKHL…DTMVHQAIHT (66 aa). The helical transmembrane segment at 725–749 threads the bilayer; sequence IEYCLGCISNTASYLRLWALSLAHA. Residues 750 to 770 lie on the Vacuolar side of the membrane; that stretch reads QLSEVLWTMVIHIGLSVKSLA. A helical transmembrane segment spans residues 771–809; it reads GGLVLFFFFTAFATLTVAILLIMEGLSAFLHALRLHWVE. The Cytoplasmic portion of the chain corresponds to 810 to 837; that stretch reads FQNKFYSGTGFKFLPFSFEHIREGKFEE.

This sequence belongs to the V-ATPase 116 kDa subunit family. V-ATPase is a heteromultimeric enzyme made up of two complexes: the ATP-hydrolytic V1 complex and the proton translocation V0 complex. The V1 complex consists of three catalytic AB heterodimers that form a heterohexamer, three peripheral stalks each consisting of EG heterodimers, one central rotor including subunits D and F, and the regulatory subunits C and H. The proton translocation complex V0 consists of the proton transport subunit a, a ring of proteolipid subunits c9c'', rotary subunit d, subunits e and f, and the accessory subunits ATP6AP1/Ac45 and ATP6AP2/PRR. Interacts with SPAAR.

The protein resides in the cytoplasmic vesicle. Its subcellular location is the clathrin-coated vesicle membrane. It localises to the secretory vesicle. It is found in the synaptic vesicle membrane. The protein localises to the melanosome. Functionally, subunit of the V0 complex of vacuolar(H+)-ATPase (V-ATPase), a multisubunit enzyme composed of a peripheral complex (V1) that hydrolyzes ATP and a membrane integral complex (V0) that transports protons across cellular membranes. V-ATPase is responsible for the acidification of various organelles, such as lysosomes, endosomes, the trans-Golgi network, and secretory granules, including synaptic vesicles. In certain cell types, can be exported to the plasma membrane, where it is involved in the acidification of the extracellular environment. Required for assembly and activity of the vacuolar ATPase. Through its action on compartment acidification, plays an essential role in neuronal development in terms of integrity and connectivity of neurons. This is V-type proton ATPase 116 kDa subunit a 1 (ATP6V0A1) from Homo sapiens (Human).